The sequence spans 148 residues: MTERPFWQQKTLSEMSDDEWESLCDGCGQCCLHKLIDEDTEEIYFTNVACNQLNIKSCQCRNYEKRFEYEPDCIKLTRENLLTFNWLPATCAYRLVHEREDLPQWHPLVCGTKTEMHRERISVRHIAVRESEVVDWQDHILNKPGWAR.

The protein belongs to the UPF0260 family.

This Pectobacterium atrosepticum (strain SCRI 1043 / ATCC BAA-672) (Erwinia carotovora subsp. atroseptica) protein is UPF0260 protein ECA2365.